Reading from the N-terminus, the 461-residue chain is Glycine--tRNA ligase (461 aa).

Positions 99 and 173 each coordinate substrate. ATP contacts are provided by residues 205-207, 215-220, 289-290, and 333-336; these read RNE, FRTREF, EL, and GADR. Residue 220–224 participates in substrate binding; sequence FEQME. 329-333 provides a ligand contact to substrate; sequence EPSLG.

It belongs to the class-II aminoacyl-tRNA synthetase family. In terms of assembly, homodimer.

The protein resides in the cytoplasm. It carries out the reaction tRNA(Gly) + glycine + ATP = glycyl-tRNA(Gly) + AMP + diphosphate. Catalyzes the attachment of glycine to tRNA(Gly). The sequence is that of Glycine--tRNA ligase from Lysinibacillus sphaericus (strain C3-41).